We begin with the raw amino-acid sequence, 223 residues long: Carnitine transport permease protein OpuCD (223 aa).

Residues 22-202 (FWRHFLMSAY…VMAILADVLL (181 aa)) enclose the ABC transmembrane type-1 domain. Helical transmembrane passes span 27 to 47 (LMSA…GVYI), 63 to 83 (IIQT…MGLG), 87 to 107 (VVLS…YTGI), 148 to 168 (ALVI…GGLG), and 182 to 202 (AIIL…DVLL).

The protein belongs to the binding-protein-dependent transport system permease family. The complex is composed of two ATP-binding proteins (OpuCA), two transmembrane proteins (OpuCB and OpuCD) and a solute-binding protein (OpuCC).

Its subcellular location is the cell membrane. Its function is as follows. Part of the ABC transporter complex OpuCABCD involved in carnitine uptake. Probably responsible for the translocation of the substrate across the membrane. Involved, with BetL and GbuABC, in osmoprotection and cryoprotection of Listeria. Can also mediate weak glycine betaine transport. The polypeptide is Carnitine transport permease protein OpuCD (opuCD) (Listeria monocytogenes serotype 1/2a (strain 10403S)).